The chain runs to 224 residues: N-(5'-phosphoribosyl)anthranilate isomerase (224 aa).

This sequence belongs to the TrpF family.

The catalysed reaction is N-(5-phospho-beta-D-ribosyl)anthranilate = 1-(2-carboxyphenylamino)-1-deoxy-D-ribulose 5-phosphate. It participates in amino-acid biosynthesis; L-tryptophan biosynthesis; L-tryptophan from chorismate: step 3/5. This is N-(5'-phosphoribosyl)anthranilate isomerase from Allorhizobium ampelinum (strain ATCC BAA-846 / DSM 112012 / S4) (Agrobacterium vitis (strain S4)).